The chain runs to 151 residues: Putative pre-16S rRNA nuclease (151 aa).

The protein belongs to the YqgF nuclease family.

Its subcellular location is the cytoplasm. Functionally, could be a nuclease involved in processing of the 5'-end of pre-16S rRNA. The sequence is that of Putative pre-16S rRNA nuclease from Prochlorococcus marinus subsp. pastoris (strain CCMP1986 / NIES-2087 / MED4).